The sequence spans 279 residues: Small ribosomal subunit protein uS2 (279 aa).

It belongs to the universal ribosomal protein uS2 family. As to quaternary structure, component of the small ribosomal subunit. Mature ribosomes consist of a small (40S) and a large (60S) subunit. The 40S subunit contains about 33 different proteins and 1 molecule of RNA (18S). The 60S subunit contains about 49 different proteins and 3 molecules of RNA (28S, 5.8S and 5S). Interacts with ribosomal protein S21.

Its subcellular location is the cytoplasm. Required for the assembly and/or stability of the 40S ribosomal subunit. Required for the processing of the 20S rRNA-precursor to mature 18S rRNA in a late step of the maturation of 40S ribosomal subunits. The sequence is that of Small ribosomal subunit protein uS2 from Schistosoma japonicum (Blood fluke).